Here is a 306-residue protein sequence, read N- to C-terminus: Lipoyl synthase (306 aa).

[4Fe-4S] cluster is bound by residues Cys55, Cys60, Cys66, Cys81, Cys85, Cys88, and Ser294. Positions 67–283 constitute a Radical SAM core domain; that stretch reads WNHRTATFLL…RAYALARGFR (217 aa).

Belongs to the radical SAM superfamily. Lipoyl synthase family. [4Fe-4S] cluster is required as a cofactor.

The protein resides in the cytoplasm. The catalysed reaction is [[Fe-S] cluster scaffold protein carrying a second [4Fe-4S](2+) cluster] + N(6)-octanoyl-L-lysyl-[protein] + 2 oxidized [2Fe-2S]-[ferredoxin] + 2 S-adenosyl-L-methionine + 4 H(+) = [[Fe-S] cluster scaffold protein] + N(6)-[(R)-dihydrolipoyl]-L-lysyl-[protein] + 4 Fe(3+) + 2 hydrogen sulfide + 2 5'-deoxyadenosine + 2 L-methionine + 2 reduced [2Fe-2S]-[ferredoxin]. The protein operates within protein modification; protein lipoylation via endogenous pathway; protein N(6)-(lipoyl)lysine from octanoyl-[acyl-carrier-protein]: step 2/2. Its function is as follows. Catalyzes the radical-mediated insertion of two sulfur atoms into the C-6 and C-8 positions of the octanoyl moiety bound to the lipoyl domains of lipoate-dependent enzymes, thereby converting the octanoylated domains into lipoylated derivatives. This is Lipoyl synthase from Chloroflexus aggregans (strain MD-66 / DSM 9485).